The chain runs to 244 residues: Type III pantothenate kinase (244 aa).

ATP is bound at residue 7–14 (DIGNTRLK). Residues Y95 and 102–105 (GIDR) contribute to the substrate site. D104 acts as the Proton acceptor in catalysis. T126 contacts ATP. A substrate-binding site is contributed by T177.

Belongs to the type III pantothenate kinase family. Homodimer. It depends on NH4(+) as a cofactor. K(+) serves as cofactor.

Its subcellular location is the cytoplasm. It carries out the reaction (R)-pantothenate + ATP = (R)-4'-phosphopantothenate + ADP + H(+). It functions in the pathway cofactor biosynthesis; coenzyme A biosynthesis; CoA from (R)-pantothenate: step 1/5. Its function is as follows. Catalyzes the phosphorylation of pantothenate (Pan), the first step in CoA biosynthesis. The sequence is that of Type III pantothenate kinase from Acinetobacter baumannii (strain ACICU).